Consider the following 59-residue polypeptide: Antitoxin Rv0909 (59 aa).

Its function is as follows. Antitoxin component of a type II toxin-antitoxin (TA) system. Upon expression in M.smegmatis neutralizes the effect of cognate toxin Rv0910. This is Antitoxin Rv0909 from Mycobacterium tuberculosis (strain ATCC 25618 / H37Rv).